A 203-amino-acid chain; its full sequence is UPF0637 protein Sca_0732 (203 aa).

This sequence belongs to the UPF0637 family.

The polypeptide is UPF0637 protein Sca_0732 (Staphylococcus carnosus (strain TM300)).